Reading from the N-terminus, the 307-residue chain is Ribosomal RNA small subunit methyltransferase A (307 aa).

S-adenosyl-L-methionine is bound by residues Asn-35, Val-37, Gly-62, Glu-83, Asp-113, and Asn-136.

It belongs to the class I-like SAM-binding methyltransferase superfamily. rRNA adenine N(6)-methyltransferase family. RsmA subfamily.

It localises to the cytoplasm. The enzyme catalyses adenosine(1518)/adenosine(1519) in 16S rRNA + 4 S-adenosyl-L-methionine = N(6)-dimethyladenosine(1518)/N(6)-dimethyladenosine(1519) in 16S rRNA + 4 S-adenosyl-L-homocysteine + 4 H(+). In terms of biological role, specifically dimethylates two adjacent adenosines (A1518 and A1519) in the loop of a conserved hairpin near the 3'-end of 16S rRNA in the 30S particle. May play a critical role in biogenesis of 30S subunits. In Bifidobacterium longum (strain DJO10A), this protein is Ribosomal RNA small subunit methyltransferase A.